Here is a 211-residue protein sequence, read N- to C-terminus: Small ribosomal subunit protein uS4 (211 aa).

The S4 RNA-binding domain occupies 99 to 160; the sequence is RRLDSVVYQM…KSRNIQQVRE (62 aa).

It belongs to the universal ribosomal protein uS4 family. In terms of assembly, part of the 30S ribosomal subunit. Contacts protein S5. The interaction surface between S4 and S5 is involved in control of translational fidelity.

One of the primary rRNA binding proteins, it binds directly to 16S rRNA where it nucleates assembly of the body of the 30S subunit. Its function is as follows. With S5 and S12 plays an important role in translational accuracy. This Petrotoga mobilis (strain DSM 10674 / SJ95) protein is Small ribosomal subunit protein uS4.